The chain runs to 321 residues: Phosphate acyltransferase (321 aa).

It belongs to the PlsX family. In terms of assembly, homodimer. Probably interacts with PlsY.

The protein localises to the cytoplasm. The enzyme catalyses a fatty acyl-[ACP] + phosphate = an acyl phosphate + holo-[ACP]. The protein operates within lipid metabolism; phospholipid metabolism. Functionally, catalyzes the reversible formation of acyl-phosphate (acyl-PO(4)) from acyl-[acyl-carrier-protein] (acyl-ACP). This enzyme utilizes acyl-ACP as fatty acyl donor, but not acyl-CoA. The sequence is that of Phosphate acyltransferase from Chlamydia trachomatis serovar L2 (strain ATCC VR-902B / DSM 19102 / 434/Bu).